The chain runs to 279 residues: DegV domain-containing protein lmo1863 (279 aa).

The DegV domain maps to 4–278; the sequence is IKIITDSTAG…TGAFAFMYYT (275 aa). Residues Ser-62 and Ser-94 each coordinate hexadecanoate.

Its function is as follows. May bind long-chain fatty acids, such as palmitate, and may play a role in lipid transport or fatty acid metabolism. This chain is DegV domain-containing protein lmo1863, found in Listeria monocytogenes serovar 1/2a (strain ATCC BAA-679 / EGD-e).